The sequence spans 473 residues: Bestrophin-4 (473 aa).

At 1 to 31 the chain is on the cytoplasmic side; that stretch reads MTVSYTLKVAEARFGGFSGLLLRWRGSIYKL. Ala10 serves as a coordination point for Ca(2+). Residues 32–51 form a helical membrane-spanning segment; that stretch reads LYKEFLLFGALYAVLSITYR. At 52-60 the chain is on the extracellular side; the sequence is LLLTQEQRY. A helical membrane pass occupies residues 61-82; sequence VYAQVARYCNRSADLIPLSFVL. Residues 83–237 lie on the Cytoplasmic side of the membrane; it reads GFYVTLVVNR…DWISIPLVYT (155 aa). A helical transmembrane segment spans residues 238–255; sequence QVVTIAVYSFFALSLVGR. The Extracellular portion of the chain corresponds to 256 to 289; it reads QFVEPEAGAAKPQKLLKPGQEPAPALGDPDMYVP. Residues 290-303 traverse the membrane as a helical segment; sequence LTTLLQFFFYAGWL. Topologically, residues 304–473 are cytoplasmic; that stretch reads KVAEQIINPF…AESGDEALEP (170 aa). Ca(2+)-binding residues include Gln308, Asn311, Asp316, and Asp319. Disordered stretches follow at residues 379-408 and 428-473; these read TFNL…PAAQ and RNFG…ALEP. Residues 396–407 show a composition bias toward low complexity; the sequence is ASPGSGRPAPAA. Over residues 445 to 461 the composition is skewed to basic and acidic residues; the sequence is FRAEEGGDPEAAARIEE. Acidic residues predominate over residues 462–473; that stretch reads ESAESGDEALEP.

The protein belongs to the anion channel-forming bestrophin (TC 1.A.46) family. Calcium-sensitive chloride channel subfamily. In terms of tissue distribution, predominantly found in colon and the weakly in fetal brain, spinal cord, retina, lung, trachea, testis and placenta.

The protein resides in the cell membrane. It carries out the reaction chloride(in) = chloride(out). The catalysed reaction is hydrogencarbonate(in) = hydrogencarbonate(out). Functionally, ligand-gated anion channel that allows the movement of anions across cell membranes when activated by Calcium (Ca2+). Mediates the movement of hydrogencarbonate and chloride. The chain is Bestrophin-4 from Homo sapiens (Human).